A 759-amino-acid chain; its full sequence is uncharacterized protein (759 aa).

Composition is skewed to low complexity over residues 1 to 36 (MSSN…NETN), 142 to 211 (QQQN…NQHH), and 221 to 347 (NHSN…GSSS). Disordered stretches follow at residues 1-47 (MSSN…AQTP), 142-380 (QQQN…PSIG), 409-428 (NNNC…GLGY), 463-504 (IING…NFEN), and 654-759 (LVDD…YLNK). Residues 348–360 (PFQDQARSPSSSF) show a composition bias toward polar residues. 2 stretches are compositionally biased toward low complexity: residues 463–495 (IING…GNNN) and 660–747 (HISN…DNNN).

This is an uncharacterized protein from Dictyostelium discoideum (Social amoeba).